A 269-amino-acid chain; its full sequence is Thiazole synthase (269 aa).

Catalysis depends on lysine 109, which acts as the Schiff-base intermediate with DXP. Residues glycine 170, 196-197 (AG), and 218-219 (NT) each bind 1-deoxy-D-xylulose 5-phosphate.

This sequence belongs to the ThiG family. Homotetramer. Forms heterodimers with either ThiH or ThiS.

Its subcellular location is the plastid. It is found in the chloroplast. The enzyme catalyses [ThiS sulfur-carrier protein]-C-terminal-Gly-aminoethanethioate + 2-iminoacetate + 1-deoxy-D-xylulose 5-phosphate = [ThiS sulfur-carrier protein]-C-terminal Gly-Gly + 2-[(2R,5Z)-2-carboxy-4-methylthiazol-5(2H)-ylidene]ethyl phosphate + 2 H2O + H(+). It participates in cofactor biosynthesis; thiamine diphosphate biosynthesis. Functionally, catalyzes the rearrangement of 1-deoxy-D-xylulose 5-phosphate (DXP) to produce the thiazole phosphate moiety of thiamine. Sulfur is provided by the thiocarboxylate moiety of the carrier protein ThiS. In vitro, sulfur can be provided by H(2)S. The polypeptide is Thiazole synthase (Thalassiosira pseudonana (Marine diatom)).